The primary structure comprises 376 residues: S-adenosylmethionine synthase (376 aa).

An ATP-binding site is contributed by histidine 14. Aspartate 16 lines the Mg(2+) pocket. K(+) is bound at residue glutamate 42. Glutamate 55 and glutamine 98 together coordinate L-methionine. Positions 98–108 (QSPEIALGISS) are flexible loop. ATP is bound by residues 158-160 (DGK), 224-225 (RF), aspartate 233, 239-240 (RK), alanine 256, and lysine 260. Aspartate 233 lines the L-methionine pocket. Lysine 264 contributes to the L-methionine binding site.

The protein belongs to the AdoMet synthase family. As to quaternary structure, homotetramer; dimer of dimers. Mg(2+) is required as a cofactor. K(+) serves as cofactor.

The protein resides in the cytoplasm. The enzyme catalyses L-methionine + ATP + H2O = S-adenosyl-L-methionine + phosphate + diphosphate. Its pathway is amino-acid biosynthesis; S-adenosyl-L-methionine biosynthesis; S-adenosyl-L-methionine from L-methionine: step 1/1. Its function is as follows. Catalyzes the formation of S-adenosylmethionine (AdoMet) from methionine and ATP. The overall synthetic reaction is composed of two sequential steps, AdoMet formation and the subsequent tripolyphosphate hydrolysis which occurs prior to release of AdoMet from the enzyme. This is S-adenosylmethionine synthase from Aquifex aeolicus (strain VF5).